A 354-amino-acid chain; its full sequence is MLWVDKYRPKTLDKVTVHDQVAQNLKKLVAEQDCPHLLFYGPSGSGKKTLVMALIKQMFGAGADKVKMENKTWKIDTGSRNIEIELAMLSSAHHVEMNPSDAGFQDRYVVQEVIKEMAKNRPIDAKGKRAFKVLVLNEVDKLSREAQHSLRRTMEKYSASCRLILCCNSSSKVTEAVRSRCLNVRVNAPSEDQIVQVLEFIGKKENLQLPFGFAARIAAQSNRNLRRAILFFETCKVQQYPFTSNQVAPPLDWEQYVSEIAADIMKEQSPKRLFAVRQKFYELLVNCIPPESILKKLLAELLKKLDSDLKHEICHWAAHYEHKMRLGSKAIFHLEAFVAKFMSIYKEFLVSTFG.

Residue 40 to 47 (YGPSGSGK) participates in ATP binding.

The protein belongs to the activator 1 small subunits family. As to quaternary structure, heterotetramer of subunits RFC2, RFC3, RFC4 and RFC5 that can form a complex with RFC1. As to expression, expressed in roots, leaves, shoot apical meristem (SAM), flag leaves and panicles.

The protein localises to the nucleus. Functionally, may be involved in DNA replication and thus regulate cell proliferation. The polypeptide is Replication factor C subunit 5 (RFC5) (Oryza sativa subsp. japonica (Rice)).